The primary structure comprises 974 residues: Bifunctional glutamine synthetase adenylyltransferase/adenylyl-removing enzyme (974 aa).

The segment at 1-464 (MKNAFLKTQL…HYAALFENEQ (464 aa)) is adenylyl removase. The adenylyl transferase stretch occupies residues 468 to 974 (LEIGNLVFTG…YSIFKQVMKY (507 aa)).

The protein belongs to the GlnE family. Requires Mg(2+) as cofactor.

It catalyses the reaction [glutamine synthetase]-O(4)-(5'-adenylyl)-L-tyrosine + phosphate = [glutamine synthetase]-L-tyrosine + ADP. The catalysed reaction is [glutamine synthetase]-L-tyrosine + ATP = [glutamine synthetase]-O(4)-(5'-adenylyl)-L-tyrosine + diphosphate. Functionally, involved in the regulation of glutamine synthetase GlnA, a key enzyme in the process to assimilate ammonia. When cellular nitrogen levels are high, the C-terminal adenylyl transferase (AT) inactivates GlnA by covalent transfer of an adenylyl group from ATP to specific tyrosine residue of GlnA, thus reducing its activity. Conversely, when nitrogen levels are low, the N-terminal adenylyl removase (AR) activates GlnA by removing the adenylyl group by phosphorolysis, increasing its activity. The regulatory region of GlnE binds the signal transduction protein PII (GlnB) which indicates the nitrogen status of the cell. In Bartonella henselae (strain ATCC 49882 / DSM 28221 / CCUG 30454 / Houston 1) (Rochalimaea henselae), this protein is Bifunctional glutamine synthetase adenylyltransferase/adenylyl-removing enzyme.